The sequence spans 282 residues: Acetylglutamate kinase (282 aa).

Substrate is bound by residues 62–63, Arg-84, and Asn-178; that span reads GG.

The protein belongs to the acetylglutamate kinase family. ArgB subfamily.

It is found in the cytoplasm. The catalysed reaction is N-acetyl-L-glutamate + ATP = N-acetyl-L-glutamyl 5-phosphate + ADP. The protein operates within amino-acid biosynthesis; L-arginine biosynthesis; N(2)-acetyl-L-ornithine from L-glutamate: step 2/4. Catalyzes the ATP-dependent phosphorylation of N-acetyl-L-glutamate. The chain is Acetylglutamate kinase from Kosmotoga olearia (strain ATCC BAA-1733 / DSM 21960 / TBF 19.5.1).